We begin with the raw amino-acid sequence, 424 residues long: Probable threonylcarbamoyladenosine tRNA methylthiotransferase (424 aa).

Residues 4 to 115 (IRVYIETFGC…APQAVRAASN (112 aa)) enclose the MTTase N-terminal domain. The [4Fe-4S] cluster site is built by Cys-13, Cys-48, Cys-79, Cys-150, Cys-154, and Cys-157. Residues 136–365 (RSNPLIHIIP…EELKMRITEE (230 aa)) enclose the Radical SAM core domain. The TRAM domain maps to 368–424 (RRLVGSFQEILVVERGRKGGFIGRTGSYIPVVTETGEPGSFRRVRIRDATGTYLLAD).

This sequence belongs to the methylthiotransferase family. CDKAL1 subfamily. Requires [4Fe-4S] cluster as cofactor.

It catalyses the reaction N(6)-L-threonylcarbamoyladenosine(37) in tRNA + (sulfur carrier)-SH + AH2 + 2 S-adenosyl-L-methionine = 2-methylsulfanyl-N(6)-L-threonylcarbamoyladenosine(37) in tRNA + (sulfur carrier)-H + 5'-deoxyadenosine + L-methionine + A + S-adenosyl-L-homocysteine + 2 H(+). Functionally, catalyzes the methylthiolation of N6-threonylcarbamoyladenosine (t(6)A), leading to the formation of 2-methylthio-N6-threonylcarbamoyladenosine (ms(2)t(6)A) at position 37 in tRNAs that read codons beginning with adenine. The sequence is that of Probable threonylcarbamoyladenosine tRNA methylthiotransferase from Methanothermobacter thermautotrophicus (strain ATCC 29096 / DSM 1053 / JCM 10044 / NBRC 100330 / Delta H) (Methanobacterium thermoautotrophicum).